A 185-amino-acid chain; its full sequence is Ribosome-recycling factor (185 aa).

Belongs to the RRF family.

It localises to the cytoplasm. Its function is as follows. Responsible for the release of ribosomes from messenger RNA at the termination of protein biosynthesis. May increase the efficiency of translation by recycling ribosomes from one round of translation to another. In Dehalococcoides mccartyi (strain ATCC BAA-2266 / KCTC 15142 / 195) (Dehalococcoides ethenogenes (strain 195)), this protein is Ribosome-recycling factor.